We begin with the raw amino-acid sequence, 324 residues long: Transcriptional regulator protein Pur-beta (324 aa).

The tract at residues 1–47 (MADGDSGSERGGGGGGGGGPGGFQPAPRGGGGGGGGPGGEQETQELA) is disordered. An N-acetylalanine modification is found at Ala2. Phosphoserine is present on residues Ser6 and Ser8. The segment covering 9–39 (ERGGGGGGGGGPGGFQPAPRGGGGGGGGPGG) has biased composition (gly residues). Residue Arg28 is modified to Omega-N-methylarginine. The segment at 37-263 (PGGEQETQEL…GVFLRVSEVK (227 aa)) is DNA-binding. The residue at position 43 (Thr43) is a Phosphothreonine. Ser113 carries the post-translational modification Phosphoserine. Arg164 bears the Omega-N-methylarginine mark. Lys279 is subject to N6-acetyllysine. Over residues 297–307 (RQRDKLYERRG) the composition is skewed to basic and acidic residues. A disordered region spans residues 297–324 (RQRDKLYERRGGGSGGGDESEGEEVDED). Arg306 carries the omega-N-methylarginine modification. Phosphoserine is present on residues Ser310 and Ser316. Acidic residues predominate over residues 314-324 (DESEGEEVDED).

The protein belongs to the PUR DNA-binding protein family. As to quaternary structure, homodimer, heterodimer with PURA and heterotrimer with PURA and YBX1/Y-box protein 1. Interacts with MYOCD and SRF.

The protein localises to the nucleus. Transcriptional regulator which can act as an activator or a repressor. Represses the transcription of ACTA2 in fibroblasts and smooth muscle cells via its ability to interact with the purine-rich strand of a MCAT-containing element in the 5' flanking region of the gene. Represses the transcription of MYOCD, capable of repressing all isoforms of MYOCD but the magnitude of the repressive effects is most notable for the SMC-specific isoforms. Promotes hepatic glucose production by activating the transcription of ADCY6, leading to cAMP accumulation, increased PKA activity, CREB activation, and increased transcription of PCK1 and G6PC genes. Has capacity to bind repeated elements in single-stranded DNA such as the purine-rich single strand of the PUR element located upstream of the MYC gene. Participates in transcriptional and translational regulation of alpha-MHC expression in cardiac myocytes by binding to the purine-rich negative regulatory (PNR) element. Modulates constitutive liver galectin-3 gene transcription by binding to its promoter. May play a role in the dendritic transport of a subset of mRNAs. The protein is Transcriptional regulator protein Pur-beta (Purb) of Mus musculus (Mouse).